A 167-amino-acid chain; its full sequence is Leukotoxin-activating lysine-acyltransferase LktC serotype A1 (167 aa).

Active-site residues include His-22 and Asp-91.

It belongs to the RTX toxin acyltransferase family.

It is found in the cytoplasm. It carries out the reaction a fatty acyl-[ACP] + L-lysyl-[protein] = N(6)-(fatty acyl)-L-lysyl-[protein] + holo-[ACP] + H(+). Functionally, involved in fatty acylation of the protoxin (LktA) at two internal lysine residues, thereby converting it to the active toxin. The protein is Leukotoxin-activating lysine-acyltransferase LktC serotype A1 (lktC) of Mannheimia haemolytica (Pasteurella haemolytica).